The sequence spans 78 residues: uncharacterized protein (78 aa).

2 helical membrane-spanning segments follow: residues 7-27 (ICLV…FFQF) and 41-61 (LSRI…GLLF).

The protein resides in the cell membrane. This is an uncharacterized protein from Bacillus subtilis (strain 168).